The sequence spans 101 residues: NAD(P)H-quinone oxidoreductase subunit 4L, chloroplastic (101 aa).

A run of 3 helical transmembrane segments spans residues 2 to 22, 32 to 52, and 61 to 81; these read MLEHELVLSAYLFSIGIYGLI, MCLELILNAVNMNLVTFSDLF, and IFSIFVIAIAAAEAAIGPAIV.

The protein belongs to the complex I subunit 4L family. NDH is composed of at least 16 different subunits, 5 of which are encoded in the nucleus.

The protein resides in the plastid. It is found in the chloroplast thylakoid membrane. The catalysed reaction is a plastoquinone + NADH + (n+1) H(+)(in) = a plastoquinol + NAD(+) + n H(+)(out). It catalyses the reaction a plastoquinone + NADPH + (n+1) H(+)(in) = a plastoquinol + NADP(+) + n H(+)(out). NDH shuttles electrons from NAD(P)H:plastoquinone, via FMN and iron-sulfur (Fe-S) centers, to quinones in the photosynthetic chain and possibly in a chloroplast respiratory chain. The immediate electron acceptor for the enzyme in this species is believed to be plastoquinone. Couples the redox reaction to proton translocation, and thus conserves the redox energy in a proton gradient. In Ceratophyllum demersum (Rigid hornwort), this protein is NAD(P)H-quinone oxidoreductase subunit 4L, chloroplastic.